Reading from the N-terminus, the 302-residue chain is MDEKRLTHLRQLEAESIHIIREVAAEFSNPVMMYSIGKDSSVMLHLARKAFYPGSLPFPLLHVDTGWKFREMYEFRDRTAKAYGCELLVHRNPQGEALGINPFVHGSAKHTDIMKTEGLKQALDKYGFDAAFGGARRDEEKSRAKERIYSFRDRFHRWDPKNQRPELWHNYNGQINKGESIRVFPLSNWTELDIWQYIYLENIDIVPLYLAAPRPVLERDGMLLMVDDDRIDLQPGEVIEQRMVRFRTLGCWPLTGAVASEAQTLPEIIEEMLVSTTSERQGRVIDRDQAGSMELKKRQGYF.

It belongs to the PAPS reductase family. CysD subfamily. In terms of assembly, heterodimer composed of CysD, the smaller subunit, and CysN.

It catalyses the reaction sulfate + ATP + H(+) = adenosine 5'-phosphosulfate + diphosphate. It participates in sulfur metabolism; hydrogen sulfide biosynthesis; sulfite from sulfate: step 1/3. With CysN forms the ATP sulfurylase (ATPS) that catalyzes the adenylation of sulfate producing adenosine 5'-phosphosulfate (APS) and diphosphate, the first enzymatic step in sulfur assimilation pathway. APS synthesis involves the formation of a high-energy phosphoric-sulfuric acid anhydride bond driven by GTP hydrolysis by CysN coupled to ATP hydrolysis by CysD. This is Sulfate adenylyltransferase subunit 2 from Pectobacterium carotovorum subsp. carotovorum (strain PC1).